The chain runs to 315 residues: Aspartate carbamoyltransferase catalytic subunit (315 aa).

Residues arginine 55 and threonine 56 each contribute to the carbamoyl phosphate site. Lysine 83 lines the L-aspartate pocket. Carbamoyl phosphate is bound by residues arginine 105, histidine 138, and glutamine 141. Residues arginine 171 and arginine 225 each contribute to the L-aspartate site. Glycine 266 and proline 267 together coordinate carbamoyl phosphate.

The protein belongs to the aspartate/ornithine carbamoyltransferase superfamily. ATCase family. As to quaternary structure, heterododecamer (2C3:3R2) of six catalytic PyrB chains organized as two trimers (C3), and six regulatory PyrI chains organized as three dimers (R2).

It catalyses the reaction carbamoyl phosphate + L-aspartate = N-carbamoyl-L-aspartate + phosphate + H(+). The protein operates within pyrimidine metabolism; UMP biosynthesis via de novo pathway; (S)-dihydroorotate from bicarbonate: step 2/3. Catalyzes the condensation of carbamoyl phosphate and aspartate to form carbamoyl aspartate and inorganic phosphate, the committed step in the de novo pyrimidine nucleotide biosynthesis pathway. The polypeptide is Aspartate carbamoyltransferase catalytic subunit (Mycolicibacterium gilvum (strain PYR-GCK) (Mycobacterium gilvum (strain PYR-GCK))).